The primary structure comprises 232 residues: Phospholipase A2 hemilipin (232 aa).

Positions 1–18 are cleaved as a signal peptide; the sequence is MTFLILTILATVTPSLYS. Positions 19 to 105 are excised as a propeptide; it reads HVVQRELRVN…QRCSGSAEGR (87 aa). Residues W115, G117, and G119 each coordinate Ca(2+). Disulfide bonds link C116–C137, C136–C175, C143–C168, C166–C206, and C211–C219. An N-linked (GlcNAc...) asparagine glycan is attached at N124. H140 is a catalytic residue. D141 is a Ca(2+) binding site. Residue N157 is glycosylated (N-linked (GlcNAc...) asparagine). A propeptide spanning residues 214–217 is cleaved from the precursor; it reads KRDA.

It belongs to the phospholipase A2 family. Group III subfamily. As to quaternary structure, heterodimer composed of a small subunit and a large subunit; disulfid-linked. Ca(2+) is required as a cofactor. As to expression, expressed by the venom gland.

The protein localises to the secreted. It carries out the reaction a 1,2-diacyl-sn-glycero-3-phosphocholine + H2O = a 1-acyl-sn-glycero-3-phosphocholine + a fatty acid + H(+). Its function is as follows. Scorpion venom phospholipase A2 (PLA2) that shows high hydrolytic activities towards lecithin and acts as an effective blocker of all angiogenesis key steps in vivo and in vitro. It has no effect on apoptosis and does not display hemolytic, inflammatory or neurotoxic effects. PLA2 catalyzes the calcium-dependent hydrolysis of the 2-acyl groups in 3-sn-phosphoglycerides. This chain is Phospholipase A2 hemilipin, found in Hemiscorpius lepturus (Scorpion).